We begin with the raw amino-acid sequence, 542 residues long: uncharacterized protein (542 aa).

12 consecutive transmembrane segments (helical) span residues 12–32 (LVFGLVVIVALVAAVVVGTVL), 57–77 (FGDVQIDGEVVLLLFLPAILY), 94–114 (VIVMFSIGLVIATAVAVSWTA), 123–143 (AAAVLGAVLSPTDAAAVAGLA), 168–188 (LFAVTVAVAEGAAGIGPAALV), 191–211 (FVVSYLGGIMAGLLVGGLVTL), 216–236 (IDAPLEEGALSLLTPFAAFLL), 243–263 (SGVVAVLVSALVLTYVGPTVI), 277–297 (IATFLINGSLWVFVGVQIPGA), 313–333 (VLALAVTGVVIATRIAWVQAT), 358–378 (VTSWAGFRGAVSLAAALAVPM), and 391–411 (LIIFVVSVVILVTVLVQGTSL).

Belongs to the monovalent cation:proton antiporter 1 (CPA1) transporter (TC 2.A.36) family.

It localises to the cell membrane. This is an uncharacterized protein from Mycobacterium bovis (strain ATCC BAA-935 / AF2122/97).